Consider the following 143-residue polypeptide: Transcriptional regulator MraZ (143 aa).

SpoVT-AbrB domains are found at residues 5–47 (EYEH…PRSV) and 76–119 (AADM…APRR).

It belongs to the MraZ family. Forms oligomers.

The protein resides in the cytoplasm. It localises to the nucleoid. This Roseiflexus sp. (strain RS-1) protein is Transcriptional regulator MraZ.